Here is a 494-residue protein sequence, read N- to C-terminus: Protein DETOXIFICATION 23 (494 aa).

The disordered stretch occupies residues M1–D25. Transmembrane regions (helical) follow at residues L40 to I60, A74 to M94, I123 to L143, I158 to M178, I188 to V208, L223 to T243, G268 to L288, A297 to A317, M340 to L360, L384 to G404, L416 to L436, and V441 to M461.

The protein belongs to the multi antimicrobial extrusion (MATE) (TC 2.A.66.1) family.

The protein localises to the membrane. In Arabidopsis thaliana (Mouse-ear cress), this protein is Protein DETOXIFICATION 23.